We begin with the raw amino-acid sequence, 575 residues long: Proline--tRNA ligase 1 (575 aa).

Belongs to the class-II aminoacyl-tRNA synthetase family. ProS type 1 subfamily. In terms of assembly, homodimer.

The protein localises to the cytoplasm. It catalyses the reaction tRNA(Pro) + L-proline + ATP = L-prolyl-tRNA(Pro) + AMP + diphosphate. Functionally, catalyzes the attachment of proline to tRNA(Pro) in a two-step reaction: proline is first activated by ATP to form Pro-AMP and then transferred to the acceptor end of tRNA(Pro). As ProRS can inadvertently accommodate and process non-cognate amino acids such as alanine and cysteine, to avoid such errors it has two additional distinct editing activities against alanine. One activity is designated as 'pretransfer' editing and involves the tRNA(Pro)-independent hydrolysis of activated Ala-AMP. The other activity is designated 'posttransfer' editing and involves deacylation of mischarged Ala-tRNA(Pro). The misacylated Cys-tRNA(Pro) is not edited by ProRS. The protein is Proline--tRNA ligase 1 of Anaeromyxobacter dehalogenans (strain 2CP-C).